Here is a 286-residue protein sequence, read N- to C-terminus: Dioxygenase trt7 (286 aa).

Residues His129, Asp131, and His206 each contribute to the Fe cation site.

The protein belongs to the PhyH family. As to quaternary structure, homodimer. Requires Fe cation as cofactor.

It participates in secondary metabolite biosynthesis; terpenoid biosynthesis. Its function is as follows. Dioxygenase; part of the gene cluster that mediates the biosynthesis of terretonin, a fungal meroterpenoid that acts as a mycotoxin. The first step of the pathway is the synthesis of 3,5-dimethylorsellinic acid (DMOA) by the polyketide synthase trt4. DMOA is then prenylated into farnesyl-DMOA by the polyprenyl transferase trt2. Methylation by the methyltransferase trt5 then leads to farnesyl-DMOA methyl ester which is further subject to epoxidation by the FAD-dependent monooxygenase trt8 to yield epoxyfarnesyl-DMOA methyl ester. Cyclization of epoxyfarnesyl-DMOA methyl ester by the terpene cyclase trt1 leads to a tetracycle intermediate which is in turn converted to preterretonin. Dehydrogenase trt9 comes next to transform preterretonin to preterrenoid. The FAD-dependent monooxygenase trt3 is then required for the C-hydroxylation at C16 of preterrenoid to yield terrenoid. The cytochrome P450 trt6 catalyzes three successive oxidations to transform terrenoid into an unstable intermediate, which then undergoes the D-ring expansion and unusual rearrangement of the methoxy group to afford the core skeleton of terretonin. Trt14 catalyzes the D-ring expansion of terretonin involving intramolecular methoxy rearrangement as well as the hydrolysis of the expanded D-ring and the methyl ester moiety. Finally, the nonheme iron-dependent dioxygenase trt7 accomplishes the last two oxidation reactions steps to complete the biosynthesis of terretonin. Terretonin C is produced via spontaneous decarboxylation of the terretonin precursor. Another shunt product of the terretonin biosynthesis is dihydrofarnesyl-DMOA, derived from epoxyfarnesyl-DMOA through hydrolysis of the epoxide. The chain is Dioxygenase trt7 from Aspergillus terreus (strain NIH 2624 / FGSC A1156).